We begin with the raw amino-acid sequence, 333 residues long: Tetraacyldisaccharide 4'-kinase (333 aa).

Residue 55–62 (TAGGNGKT) coordinates ATP.

This sequence belongs to the LpxK family.

It catalyses the reaction a lipid A disaccharide + ATP = a lipid IVA + ADP + H(+). Its pathway is glycolipid biosynthesis; lipid IV(A) biosynthesis; lipid IV(A) from (3R)-3-hydroxytetradecanoyl-[acyl-carrier-protein] and UDP-N-acetyl-alpha-D-glucosamine: step 6/6. Functionally, transfers the gamma-phosphate of ATP to the 4'-position of a tetraacyldisaccharide 1-phosphate intermediate (termed DS-1-P) to form tetraacyldisaccharide 1,4'-bis-phosphate (lipid IVA). In Pectobacterium carotovorum subsp. carotovorum (strain PC1), this protein is Tetraacyldisaccharide 4'-kinase.